Here is a 205-residue protein sequence, read N- to C-terminus: Arginine exporter protein ArgO (205 aa).

Helical transmembrane passes span 1–21 (MLAVFLQGFALSAAMILPLGP), 42–62 (LCALSDIILICAGIFGGSALL), 67–87 (LLLALVTWGGVAFLLWYGWGA), 111–131 (IIVTLLAVTWLNPHVYLDTFV), 147–167 (WFAFGAVSASVAWFFALALLA), and 182–202 (VINLLVGGVMWFIAFQLARQG).

It belongs to the LysE/ArgO transporter (TC 2.A.75) family.

It localises to the cell inner membrane. The enzyme catalyses L-arginine(in) = L-arginine(out). In terms of biological role, involved in the export of arginine. Important to control the intracellular level of arginine and the correct balance between arginine and lysine. In Yersinia enterocolitica serotype O:8 / biotype 1B (strain NCTC 13174 / 8081), this protein is Arginine exporter protein ArgO.